The chain runs to 264 residues: Phosphatidylinositol transfer protein 1 (264 aa).

The segment at N151–E174 is disordered. A coiled-coil region spans residues V238–K264.

The protein belongs to the PtdIns transfer protein family. PI transfer class I subfamily. In terms of processing, phosphorylated in response to activation of rasG.

It is found in the cytoplasm. The protein resides in the golgi apparatus. Functionally, catalyzes the transfer of PtdIns and phosphatidylcholine between membranes. This Dictyostelium discoideum (Social amoeba) protein is Phosphatidylinositol transfer protein 1 (pitA).